Here is a 120-residue protein sequence, read N- to C-terminus: UPF0231 protein CKO_03249 (120 aa).

The protein belongs to the UPF0231 family.

The polypeptide is UPF0231 protein CKO_03249 (Citrobacter koseri (strain ATCC BAA-895 / CDC 4225-83 / SGSC4696)).